A 319-amino-acid polypeptide reads, in one-letter code: Lambda-crystallin homolog (319 aa).

A2 carries the N-acetylalanine modification. Position 3 is a phosphoserine (S3). NAD(+) contacts are provided by residues 16-17, D36, E97, and K102; that span reads LI.

The protein belongs to the 3-hydroxyacyl-CoA dehydrogenase family. As to quaternary structure, homodimer.

The protein resides in the cytoplasm. It catalyses the reaction L-gulonate + NAD(+) = 3-dehydro-L-gulonate + NADH + H(+). With respect to regulation, inhibited by malonate. In terms of biological role, has high L-gulonate 3-dehydrogenase activity. It also exhibits low dehydrogenase activity toward L-3-hydroxybutyrate (HBA) and L-threonate. The sequence is that of Lambda-crystallin homolog (Cryl1) from Rattus norvegicus (Rat).